The primary structure comprises 91 residues: MPRSLKKGPFIDLHLLTKVEKAVESGNKKPIKTWSRRSMIIPTMIGLTIAVHNGRQHVPVFVTEEMIGHKLGEFAPTRTYRGHVADKKAKK.

This sequence belongs to the universal ribosomal protein uS19 family.

Functionally, protein S19 forms a complex with S13 that binds strongly to the 16S ribosomal RNA. This is Small ribosomal subunit protein uS19 from Colwellia psychrerythraea (strain 34H / ATCC BAA-681) (Vibrio psychroerythus).